A 69-amino-acid polypeptide reads, in one-letter code: Large ribosomal subunit protein uL29 (69 aa).

The protein belongs to the universal ribosomal protein uL29 family.

The polypeptide is Large ribosomal subunit protein uL29 (Staphylococcus haemolyticus (strain JCSC1435)).